An 867-amino-acid chain; its full sequence is E3 ubiquitin-protein ligase SH3RF1 (867 aa).

The RING-type zinc finger occupies 12–53 (CPVCLERLDATAKVLPCQHTFCRRCLLGIVGSRGELRCPECR). Residues 101–127 (AQGAGGSQRDPGPTGGQSQRVQAKSTP) are disordered. Residues 116-125 (GQSQRVQAKS) show a composition bias toward polar residues. SH3 domains are found at residues 132–191 (PQLP…VIKP) and 194–257 (QPPP…FNSA). Residues 265 to 328 (DKPSEGGGDS…PPPQRHSMEI (64 aa)) are disordered. Positions 275–285 (SEGPSSSSSGP) are enriched in low complexity. The SH3 3 domain maps to 436 to 497 (QRPTVYVAMF…PGNYMSPVSR (62 aa)). The tract at residues 706 to 794 (LSNKKKLRPS…APIAPPPRQP (89 aa)) is disordered. Low complexity predominate over residues 760-769 (SELSMSSSSS). Positions 770 to 784 (NTDAVTHRSSPQDNT) are enriched in polar residues. The region spanning 808 to 867 (IVCERYRVVVSYPPQSEAELELKEGDIVFVHKKREDGWFKGTLQRNGRTGLFPGSFVDSI) is the SH3 4 domain.

This sequence belongs to the SH3RF family. In terms of processing, autoubiquitinated. Ubiquitinated by SH3RF2, leading to proteasome-mediated degradation.

It is found in the cytoplasm. Its subcellular location is the perinuclear region. The protein localises to the cell projection. It localises to the lamellipodium. The protein resides in the golgi apparatus. It is found in the trans-Golgi network. It catalyses the reaction S-ubiquitinyl-[E2 ubiquitin-conjugating enzyme]-L-cysteine + [acceptor protein]-L-lysine = [E2 ubiquitin-conjugating enzyme]-L-cysteine + N(6)-ubiquitinyl-[acceptor protein]-L-lysine.. Its pathway is protein modification; protein ubiquitination. Functionally, has E3 ubiquitin-protein ligase activity. In the absence of an external substrate, it can catalyze self-ubiquitination. Acts as a scaffold protein that contributes to the effective activation of the JNK signaling pathway. The protein is E3 ubiquitin-protein ligase SH3RF1 (sh3rf1) of Danio rerio (Zebrafish).